The sequence spans 297 residues: tRNA dimethylallyltransferase (297 aa).

Residue 8–15 participates in ATP binding; it reads GATASGKS. A substrate-binding site is contributed by 10 to 15; the sequence is TASGKS. The interaction with substrate tRNA stretch occupies residues 33–36; that stretch reads DSLS.

It belongs to the IPP transferase family. Monomer. Mg(2+) serves as cofactor.

It catalyses the reaction adenosine(37) in tRNA + dimethylallyl diphosphate = N(6)-dimethylallyladenosine(37) in tRNA + diphosphate. In terms of biological role, catalyzes the transfer of a dimethylallyl group onto the adenine at position 37 in tRNAs that read codons beginning with uridine, leading to the formation of N6-(dimethylallyl)adenosine (i(6)A). This is tRNA dimethylallyltransferase from Sulfurimonas denitrificans (strain ATCC 33889 / DSM 1251) (Thiomicrospira denitrificans (strain ATCC 33889 / DSM 1251)).